Reading from the N-terminus, the 177-residue chain is 2-C-methyl-D-erythritol 2,4-cyclodiphosphate synthase (177 aa).

Residues D23 and H25 each coordinate a divalent metal cation. 4-CDP-2-C-methyl-D-erythritol 2-phosphate contacts are provided by residues 23-25 and 49-50; these read DVH and HS. H57 provides a ligand contact to a divalent metal cation. Residues 71–73, 76–80, 115–121, and R157 each bind 4-CDP-2-C-methyl-D-erythritol 2-phosphate; these read DIG, FSDTD, and AQAPRMA.

This sequence belongs to the IspF family. In terms of assembly, homotrimer. A divalent metal cation serves as cofactor.

The catalysed reaction is 4-CDP-2-C-methyl-D-erythritol 2-phosphate = 2-C-methyl-D-erythritol 2,4-cyclic diphosphate + CMP. Its pathway is isoprenoid biosynthesis; isopentenyl diphosphate biosynthesis via DXP pathway; isopentenyl diphosphate from 1-deoxy-D-xylulose 5-phosphate: step 4/6. In terms of biological role, involved in the biosynthesis of isopentenyl diphosphate (IPP) and dimethylallyl diphosphate (DMAPP), two major building blocks of isoprenoid compounds. Catalyzes the conversion of 4-diphosphocytidyl-2-C-methyl-D-erythritol 2-phosphate (CDP-ME2P) to 2-C-methyl-D-erythritol 2,4-cyclodiphosphate (ME-CPP) with a corresponding release of cytidine 5-monophosphate (CMP). The protein is 2-C-methyl-D-erythritol 2,4-cyclodiphosphate synthase of Nitrosospira multiformis (strain ATCC 25196 / NCIMB 11849 / C 71).